The primary structure comprises 488 residues: Glutamyl-tRNA(Gln) amidotransferase subunit A (488 aa).

Catalysis depends on charge relay system residues Lys77 and Ser152. The active-site Acyl-ester intermediate is Ser176.

Belongs to the amidase family. GatA subfamily. As to quaternary structure, heterotrimer of A, B and C subunits.

The catalysed reaction is L-glutamyl-tRNA(Gln) + L-glutamine + ATP + H2O = L-glutaminyl-tRNA(Gln) + L-glutamate + ADP + phosphate + H(+). In terms of biological role, allows the formation of correctly charged Gln-tRNA(Gln) through the transamidation of misacylated Glu-tRNA(Gln) in organisms which lack glutaminyl-tRNA synthetase. The reaction takes place in the presence of glutamine and ATP through an activated gamma-phospho-Glu-tRNA(Gln). The polypeptide is Glutamyl-tRNA(Gln) amidotransferase subunit A (Streptococcus thermophilus (strain CNRZ 1066)).